A 457-amino-acid polypeptide reads, in one-letter code: Argininosuccinate lyase (457 aa).

Belongs to the lyase 1 family. Argininosuccinate lyase subfamily.

The protein resides in the cytoplasm. It carries out the reaction 2-(N(omega)-L-arginino)succinate = fumarate + L-arginine. It functions in the pathway amino-acid biosynthesis; L-arginine biosynthesis; L-arginine from L-ornithine and carbamoyl phosphate: step 3/3. The polypeptide is Argininosuccinate lyase (Shigella flexneri serotype 5b (strain 8401)).